Here is a 38-residue protein sequence, read N- to C-terminus: Iota-conotoxin-like L11.5 (38 aa).

4 cysteine pairs are disulfide-bonded: Cys-5/Cys-19, Cys-12/Cys-24, Cys-18/Cys-29, and Cys-23/Cys-36.

This sequence belongs to the conotoxin I1 superfamily. In terms of tissue distribution, expressed by the venom duct.

The protein localises to the secreted. Its function is as follows. Iota-conotoxins bind to voltage-gated sodium channels (Nav) and act as agonists by shifting the voltage-dependence of activation to more hyperpolarized levels. Produces general excitatory symptoms. This Conus lynceus (Lynceus cone) protein is Iota-conotoxin-like L11.5.